Reading from the N-terminus, the 510-residue chain is Aromatic-L-amino-acid decarboxylase (510 aa).

The segment covering 1–17 (MSHIPISNTIPPKQTDG) has biased composition (polar residues). A disordered region spans residues 1–29 (MSHIPISNTIPPKQTDGNGKANISPDKLD). Threonine 117 is a binding site for substrate. Residues alanine 183, serine 184, histidine 227, aspartate 305, and asparagine 334 each coordinate pyridoxal 5'-phosphate. Histidine 227 lines the substrate pocket. Lysine 337 is subject to N6-(pyridoxal phosphate)lysine. Residues 358 to 384 (NAFNVDPLYLKHDMQGSAPDYRHWQIP) are disordered.

The protein belongs to the group II decarboxylase family. As to quaternary structure, homodimer. Pyridoxal 5'-phosphate is required as a cofactor.

It catalyses the reaction L-dopa + H(+) = dopamine + CO2. The enzyme catalyses 5-hydroxy-L-tryptophan + H(+) = serotonin + CO2. Catalyzes the decarboxylation of L-3,4-dihydroxyphenylalanine (L-DOPA) to dopamine and L-5-hydroxytryptophan (5-HTP) to serotonin. Catalyzes the formation of serotonin more efficiently than dopamine. Displays no activity to tyrosine. Variation in the synthesis of bioamines may be a factor contributing to natural variation in life span. This chain is Aromatic-L-amino-acid decarboxylase (Ddc), found in Drosophila simulans (Fruit fly).